The primary structure comprises 189 residues: Group XIIA secretory phospholipase A2 (189 aa).

The signal sequence occupies residues 1–22; it reads MALLSRPALTLLLLLMAAVVRC. 3 residues coordinate Ca(2+): glycine 88, proline 90, and phenylalanine 92. Residue histidine 110 is part of the active site. Aspartate 111 contacts Ca(2+). Aspartate 125 is an active-site residue.

The cofactor is Ca(2+). Abundantly expressed in heart, skeletal muscle, kidney, liver and pancreas.

The protein resides in the secreted. It is found in the cytoplasm. The catalysed reaction is a 1,2-diacyl-sn-glycero-3-phosphocholine + H2O = a 1-acyl-sn-glycero-3-phosphocholine + a fatty acid + H(+). In terms of biological role, PA2 catalyzes the calcium-dependent hydrolysis of the 2-acyl groups in 3-sn-phosphoglycerides. Does not exhibit detectable activity toward sn-2-arachidonoyl- or linoleoyl-phosphatidylcholine or -phosphatidylethanolamine. The chain is Group XIIA secretory phospholipase A2 (PLA2G12A) from Homo sapiens (Human).